A 400-amino-acid polypeptide reads, in one-letter code: NADH-quinone oxidoreductase subunit D (400 aa).

Belongs to the complex I 49 kDa subunit family. NDH-1 is composed of 14 different subunits. Subunits NuoB, C, D, E, F, and G constitute the peripheral sector of the complex.

The protein localises to the cell inner membrane. The catalysed reaction is a quinone + NADH + 5 H(+)(in) = a quinol + NAD(+) + 4 H(+)(out). NDH-1 shuttles electrons from NADH, via FMN and iron-sulfur (Fe-S) centers, to quinones in the respiratory chain. The immediate electron acceptor for the enzyme in this species is believed to be a menaquinone. Couples the redox reaction to proton translocation (for every two electrons transferred, four hydrogen ions are translocated across the cytoplasmic membrane), and thus conserves the redox energy in a proton gradient. The chain is NADH-quinone oxidoreductase subunit D from Pelodictyon phaeoclathratiforme (strain DSM 5477 / BU-1).